A 144-amino-acid polypeptide reads, in one-letter code: 3-dehydroquinate dehydratase (144 aa).

Tyrosine 22 (proton acceptor) is an active-site residue. Positions 73, 79, and 86 each coordinate substrate. The Proton donor role is filled by histidine 99. Substrate-binding positions include 100–101 (LS) and arginine 110.

Belongs to the type-II 3-dehydroquinase family. In terms of assembly, homododecamer.

The catalysed reaction is 3-dehydroquinate = 3-dehydroshikimate + H2O. The protein operates within metabolic intermediate biosynthesis; chorismate biosynthesis; chorismate from D-erythrose 4-phosphate and phosphoenolpyruvate: step 3/7. Functionally, catalyzes a trans-dehydration via an enolate intermediate. The polypeptide is 3-dehydroquinate dehydratase (Geotalea daltonii (strain DSM 22248 / JCM 15807 / FRC-32) (Geobacter daltonii)).